The sequence spans 399 residues: Lipid droplet-regulating VLDL assembly factor AUP1 (399 aa).

The Cytoplasmic segment spans residues Met-1 to Ser-21. An intramembrane segment occupies Leu-22–Ile-42. Topologically, residues Gly-43 to Gly-399 are cytoplasmic. Residues Thr-284–Val-326 form the CUE domain. The segment at Glu-332 to Leu-364 is disordered.

This sequence belongs to the AUP1 family.

It is found in the endoplasmic reticulum membrane. Its subcellular location is the lipid droplet. Its function is as follows. Plays a role in the translocation of terminally misfolded proteins from the endoplasmic reticulum lumen to the cytoplasm and their degradation by the proteasome. Plays a role in lipid droplet formation. Induces lipid droplet clustering. This is Lipid droplet-regulating VLDL assembly factor AUP1 from Xenopus laevis (African clawed frog).